Consider the following 205-residue polypeptide: MSRYRGPRIKIIRRLGILPGLTRKIPKKSMKLRSLSLQSKSKKKDSQYRIRLQEKQKLRYHYGLHERQLLKYVRIARKAKGSTGQVLLQLLEMRLDNTIFRLGMAPTIPAARQLVNHGHILVNGRIVNIPSYRCKPQDSITINTRTQTIALIQQNLGTTRKTKLPSHLMLRSTENSATVKQIVSRQSVGLKINELLVVEYYSRQA.

Residues 93–154 (MRLDNTIFRL…RTQTIALIQQ (62 aa)) enclose the S4 RNA-binding domain.

Belongs to the universal ribosomal protein uS4 family. Part of the 30S ribosomal subunit. Contacts protein S5. The interaction surface between S4 and S5 is involved in control of translational fidelity.

The protein localises to the plastid. It localises to the chloroplast. Functionally, one of the primary rRNA binding proteins, it binds directly to 16S rRNA where it nucleates assembly of the body of the 30S subunit. In terms of biological role, with S5 and S12 plays an important role in translational accuracy. The sequence is that of Small ribosomal subunit protein uS4c (rps4) from Chaetosphaeridium globosum (Charophycean green alga).